Reading from the N-terminus, the 79-residue chain is Conotoxin Cal9.2a (79 aa).

Positions 1-23 (MNCYLILTVALLLTSAMTGTTTA) are cleaved as a signal peptide. The propeptide occupies 24-33 (GQLNKKGVTL). Intrachain disulfides connect Cys41–Cys58, Cys46–Cys68, and Cys48–Cys73.

Expressed by the venom duct.

Its subcellular location is the secreted. Functionally, probable neurotoxin with unknown target. Possibly targets ion channels. The protein is Conotoxin Cal9.2a of Californiconus californicus (California cone).